Here is a 432-residue protein sequence, read N- to C-terminus: Acetylserotonin O-methyltransferase (432 aa).

S-adenosyl-L-methionine-binding positions include Y146, W163, D209, G235–F237, and R252. H255 serves as the catalytic Proton donor/acceptor. Substrate contacts are provided by D256, N302, and Q306. Positions V373–K432 are disordered.

This sequence belongs to the class I-like SAM-binding methyltransferase superfamily. Cation-independent O-methyltransferase family. Homodimer. As to expression, expressed predominantly in the pineal gland (at protein level). Very low expression, if any, in the retina.

The enzyme catalyses N-acetylserotonin + S-adenosyl-L-methionine = melatonin + S-adenosyl-L-homocysteine + H(+). The protein operates within aromatic compound metabolism; melatonin biosynthesis; melatonin from serotonin: step 1/2. Its function is as follows. Catalyzes the transfer of a methyl group onto N-acetylserotonin, producing melatonin (N-acetyl-5-methoxytryptamine). This is Acetylserotonin O-methyltransferase (Asmt) from Rattus norvegicus (Rat).